Here is a 135-residue protein sequence, read N- to C-terminus: Galectin-1 (135 aa).

An N-acetylalanine modification is found at Ala-2. Residues 4–135 enclose the Galectin domain; it reads GLVASNLNLK…DFKIKCVAFE (132 aa). Lys-13, Lys-19, and Lys-29 each carry N6-acetyllysine. The residue at position 30 (Ser-30) is a Phosphoserine. A beta-D-galactoside-binding positions include 45-49, His-53, Asn-62, and 69-72; these read HFNPR and WGTE. Lys-108 carries the N6-acetyllysine; alternate modification. At Lys-108 the chain carries N6-succinyllysine; alternate. Lys-128 bears the N6-acetyllysine mark.

Homodimer. Binds LGALS3BP. Interacts with CD2, CD3, CD4, CD6, CD7, CD43, ALCAM and CD45. Interacts with laminin (via poly-N-acetyllactosamine). Interacts with SUSD2. Interacts with cargo receptor TMED10; the interaction mediates the translocation from the cytoplasm into the ERGIC (endoplasmic reticulum-Golgi intermediate compartment) and thereby secretion. Interacts with CD69.

Its subcellular location is the secreted. The protein localises to the extracellular space. It localises to the extracellular matrix. It is found in the cytoplasm. Lectin that binds beta-galactoside and a wide array of complex carbohydrates. Plays a role in regulating apoptosis, cell proliferation and cell differentiation. Inhibits CD45 protein phosphatase activity and therefore the dephosphorylation of Lyn kinase. Strong inducer of T-cell apoptosis. Plays a negative role in Th17 cell differentiation via activation of the receptor CD69. The polypeptide is Galectin-1 (Lgals1) (Mus musculus (Mouse)).